A 55-amino-acid chain; its full sequence is Transcriptional regulator CdrS (55 aa).

Belongs to the CdrS family.

Its subcellular location is the cytoplasm. Transcriptional regulator which plays a central role in the regulation of cell division. Activates the expression of the gene encoding the cell division protein FtsZ2, and of other genes encoding proteins predicted to function in critical aspects of cell division. Required for normal cell division but not for cell elongation. May act during the transition from stasis to growth. The CdrSL-FtsZ2 transcriptional network might coordinate cell division timing with cell growth. The chain is Transcriptional regulator CdrS from Halobacterium salinarum (strain ATCC 700922 / JCM 11081 / NRC-1) (Halobacterium halobium).